Here is a 197-residue protein sequence, read N- to C-terminus: Wadjet protein JetB (197 aa).

Component of antiplasmid transformation system Wadjet type I, composed of JetA, JetB, JetC and JetD. Expression of Wadjet type I in B.subtilis (strain BEST7003) reduces the transformation efficiency of plasmid pHCMC05. This chain is Wadjet protein JetB, found in Bacillus cereus (strain Q1).